Reading from the N-terminus, the 245-residue chain is Phosphoadenosine 5'-phosphosulfate reductase (245 aa).

Cys239 serves as the catalytic Nucleophile; cysteine thiosulfonate intermediate.

Belongs to the PAPS reductase family. CysH subfamily.

The protein resides in the cytoplasm. The enzyme catalyses [thioredoxin]-disulfide + sulfite + adenosine 3',5'-bisphosphate + 2 H(+) = [thioredoxin]-dithiol + 3'-phosphoadenylyl sulfate. The protein operates within sulfur metabolism; hydrogen sulfide biosynthesis; sulfite from sulfate: step 3/3. Its function is as follows. Catalyzes the formation of sulfite from phosphoadenosine 5'-phosphosulfate (PAPS) using thioredoxin as an electron donor. This chain is Phosphoadenosine 5'-phosphosulfate reductase, found in Alkalilimnicola ehrlichii (strain ATCC BAA-1101 / DSM 17681 / MLHE-1).